The chain runs to 299 residues: Ribosomal RNA small subunit methyltransferase H (299 aa).

S-adenosyl-L-methionine contacts are provided by residues 36–38 (GGH), Asp55, Asp103, and Gln110. Basic and acidic residues-rich tracts occupy residues 268–282 (KPVR…ENPR) and 289–299 (RAAERIEKGGD). A disordered region spans residues 268–299 (KPVRPSEEEIRENPRARSGRLRAAERIEKGGD).

This sequence belongs to the methyltransferase superfamily. RsmH family.

It localises to the cytoplasm. It catalyses the reaction cytidine(1402) in 16S rRNA + S-adenosyl-L-methionine = N(4)-methylcytidine(1402) in 16S rRNA + S-adenosyl-L-homocysteine + H(+). Its function is as follows. Specifically methylates the N4 position of cytidine in position 1402 (C1402) of 16S rRNA. The chain is Ribosomal RNA small subunit methyltransferase H from Thermotoga sp. (strain RQ2).